Reading from the N-terminus, the 214-residue chain is Threonylcarbamoyl-AMP synthase (214 aa).

Positions 9-214 (TDSTIQAATW…GDALTGQVIR (206 aa)) constitute a YrdC-like domain.

This sequence belongs to the SUA5 family. TsaC subfamily.

It localises to the cytoplasm. It catalyses the reaction L-threonine + hydrogencarbonate + ATP = L-threonylcarbamoyladenylate + diphosphate + H2O. Required for the formation of a threonylcarbamoyl group on adenosine at position 37 (t(6)A37) in tRNAs that read codons beginning with adenine. Catalyzes the conversion of L-threonine, HCO(3)(-)/CO(2) and ATP to give threonylcarbamoyl-AMP (TC-AMP) as the acyladenylate intermediate, with the release of diphosphate. The chain is Threonylcarbamoyl-AMP synthase from Psychrobacter cryohalolentis (strain ATCC BAA-1226 / DSM 17306 / VKM B-2378 / K5).